Reading from the N-terminus, the 218-residue chain is MIIAIDGPSASGKSSVSKALSMKLGFKFISSGYLYRIITLIAQRFTLNEYDLLNESKLVDLISQNDIKYNDNSFLLNGVDVISHILTEKIDFQVSLYSSYVNIRKIVNKKLREIVKIQDDDYIIEGRDITTVVFPEAKIKIYLDASVEVRTLRRYNQRDDDMALIELEQALEKRDEIDQNKEYGKLKLGKGVFYIDTSYKSLDDVCDIIIKTFNLKKK.

7–15 contacts ATP; it reads GPSASGKSS.

Belongs to the cytidylate kinase family. Type 1 subfamily.

It is found in the cytoplasm. It catalyses the reaction CMP + ATP = CDP + ADP. The catalysed reaction is dCMP + ATP = dCDP + ADP. The chain is Cytidylate kinase from Borrelia duttonii (strain Ly).